Here is a 99-residue protein sequence, read N- to C-terminus: Co-chaperonin GroES (99 aa).

The protein belongs to the GroES chaperonin family. Heptamer of 7 subunits arranged in a ring. Interacts with the chaperonin GroEL.

It localises to the cytoplasm. Together with the chaperonin GroEL, plays an essential role in assisting protein folding. The GroEL-GroES system forms a nano-cage that allows encapsulation of the non-native substrate proteins and provides a physical environment optimized to promote and accelerate protein folding. GroES binds to the apical surface of the GroEL ring, thereby capping the opening of the GroEL channel. The protein is Co-chaperonin GroES of Rhodococcus erythropolis (strain PR4 / NBRC 100887).